Consider the following 224-residue polypeptide: DNA mismatch repair protein MutH (224 aa).

The protein belongs to the MutH family.

It localises to the cytoplasm. Sequence-specific endonuclease that cleaves unmethylated GATC sequences. It is involved in DNA mismatch repair. This Shewanella amazonensis (strain ATCC BAA-1098 / SB2B) protein is DNA mismatch repair protein MutH.